A 96-amino-acid chain; its full sequence is Integration host factor subunit alpha (96 aa).

It belongs to the bacterial histone-like protein family. Heterodimer of an alpha and a beta chain.

Its function is as follows. This protein is one of the two subunits of integration host factor, a specific DNA-binding protein that functions in genetic recombination as well as in transcriptional and translational control. In Haemophilus influenzae (strain 86-028NP), this protein is Integration host factor subunit alpha.